Consider the following 216-residue polypeptide: GTP cyclohydrolase 1 (216 aa).

Residues Cys-108, His-111, and Cys-179 each coordinate Zn(2+).

This sequence belongs to the GTP cyclohydrolase I family. As to quaternary structure, toroid-shaped homodecamer, composed of two pentamers of five dimers.

It carries out the reaction GTP + H2O = 7,8-dihydroneopterin 3'-triphosphate + formate + H(+). The protein operates within cofactor biosynthesis; 7,8-dihydroneopterin triphosphate biosynthesis; 7,8-dihydroneopterin triphosphate from GTP: step 1/1. The polypeptide is GTP cyclohydrolase 1 (Shewanella sp. (strain ANA-3)).